Reading from the N-terminus, the 697-residue chain is Polyribonucleotide nucleotidyltransferase (697 aa).

Mg(2+)-binding residues include aspartate 486 and aspartate 492. The region spanning 553–612 (PRIHTIKIHPDKIKDVIGKCGSVIRALTEETKTIIDIEDDGTVTVAATDSIKAQQAICRI) is the KH domain. Residues 622–690 (GSIYHGKVTR…RQGRIRLSMK (69 aa)) form the S1 motif domain.

This sequence belongs to the polyribonucleotide nucleotidyltransferase family. As to quaternary structure, component of the RNA degradosome, which is a multiprotein complex involved in RNA processing and mRNA degradation. The cofactor is Mg(2+).

It localises to the cytoplasm. It carries out the reaction RNA(n+1) + phosphate = RNA(n) + a ribonucleoside 5'-diphosphate. Functionally, involved in mRNA degradation. Catalyzes the phosphorolysis of single-stranded polyribonucleotides processively in the 3'- to 5'-direction. The polypeptide is Polyribonucleotide nucleotidyltransferase (Baumannia cicadellinicola subsp. Homalodisca coagulata).